A 518-amino-acid chain; its full sequence is MAIYSQVPWTLPRYKFEVKVHPLAATSNLQPDDGYKIELRAENTVDKYPAKQHARRVAAQIRQGLGLIFLMGQKSTLHEDSDQERSLRQRRYFFYLSGVDEADCDLTYDIKTDKLTLYVPDFDLRRAIWMGPTLERKAALRKFDVDEVNYHSALDEDVKKWAKNQDTGSTIYLLHGSQGPAENPPNVTIDSKALKLAMDACRVIKDEHEIQLIRRANDISAAAHLEILRGIKSMSNESHIEGSFLNTSVSLGAHKQAYQIIAASGSNAATLHYSKNNEPLKGRQFVCLDAGAEWNCYASDVTRTFPITHQWPSIEAKQIYQLVQEMQESCIALVKEGVRYLDLHFLAHSILIKGFLTLGIFKGGTLDEVKKSGASLLFFPHGLGHHIGLEVHDVSPQSIMAQGINDDSNNILILPTCVSPCTTSSPALISGMVITIEPGIYFSQLALDNAKPEQLKYIDMARVKNYMAVGGVRIEDDILVTKTGYENLTKVPKGDDMLEIIRQGKKGNDSPCVDRPTW.

Mn(2+)-binding residues include aspartate 289, aspartate 300, glutamate 437, and glutamate 475.

This sequence belongs to the peptidase M24B family. Mn(2+) is required as a cofactor.

It carries out the reaction Release of any N-terminal amino acid, including proline, that is linked to proline, even from a dipeptide or tripeptide.. Catalyzes the removal of a penultimate prolyl residue from the N-termini of peptides. This chain is Probable Xaa-Pro aminopeptidase HCDG_07916, found in Ajellomyces capsulatus (strain H143) (Darling's disease fungus).